Reading from the N-terminus, the 318-residue chain is Pantothenate kinase (318 aa).

96–103 (GSVAVGKS) provides a ligand contact to ATP.

The protein belongs to the prokaryotic pantothenate kinase family.

The protein localises to the cytoplasm. It catalyses the reaction (R)-pantothenate + ATP = (R)-4'-phosphopantothenate + ADP + H(+). It functions in the pathway cofactor biosynthesis; coenzyme A biosynthesis; CoA from (R)-pantothenate: step 1/5. This is Pantothenate kinase from Rhodopseudomonas palustris (strain ATCC BAA-98 / CGA009).